Consider the following 248-residue polypeptide: Methionine aminopeptidase 1 (248 aa).

Histidine 77 contributes to the substrate binding site. A divalent metal cation-binding residues include aspartate 94, aspartate 105, and histidine 168. Histidine 175 is a substrate binding site. 2 residues coordinate a divalent metal cation: glutamate 201 and glutamate 232.

As to quaternary structure, monomer. It depends on Co(2+) as a cofactor. Zn(2+) is required as a cofactor. Mn(2+) serves as cofactor. Requires Fe(2+) as cofactor.

Its subcellular location is the cytoplasm. It carries out the reaction Release of N-terminal amino acids, preferentially methionine, from peptides and arylamides.. Its function is as follows. Removes the N-terminal methionine from nascent proteins. The N-terminal methionine is often cleaved when the second residue in the primary sequence is small and uncharged (Met-Ala-, Cys, Gly, Pro, Ser, Thr, or Val). Requires deformylation of the N(alpha)-formylated initiator methionine before it can be hydrolyzed. The protein is Methionine aminopeptidase 1 of Bacillus subtilis (strain 168).